A 208-amino-acid polypeptide reads, in one-letter code: Uracil phosphoribosyltransferase (208 aa).

5-phospho-alpha-D-ribose 1-diphosphate contacts are provided by residues arginine 78, arginine 103, and 130–138 (DPMLATGGS). Residues isoleucine 193 and 198 to 200 (GDA) each bind uracil. Aspartate 199 contacts 5-phospho-alpha-D-ribose 1-diphosphate.

This sequence belongs to the UPRTase family. Mg(2+) serves as cofactor.

It carries out the reaction UMP + diphosphate = 5-phospho-alpha-D-ribose 1-diphosphate + uracil. Its pathway is pyrimidine metabolism; UMP biosynthesis via salvage pathway; UMP from uracil: step 1/1. Allosterically activated by GTP. Catalyzes the conversion of uracil and 5-phospho-alpha-D-ribose 1-diphosphate (PRPP) to UMP and diphosphate. The sequence is that of Uracil phosphoribosyltransferase from Neisseria meningitidis serogroup B (strain ATCC BAA-335 / MC58).